Here is a 374-residue protein sequence, read N- to C-terminus: MSKFYKSGRVTTAVIVALSLSACARFDARTQANGDFDYVQTPRGEHYQTAHFTQNEARDIYDIPALTEQQKRIGFLSSNVDIRPPTQLIPVIDGVVLEANNSDKTTVLFNAFNHTENMKDKVWTLLESYIAANNIEVAAKDSNLTQIETGMFRHQQAYGSFLFRTKVVRESSYRFTLNQPQGGQNAALTVEVLSYSEKNDNVDLKVNLTARSKKSIELRLVNDLLKYAYQLKESSELQVANSQPLPIKLGYDDNNQMVWIVDADFIVSWTKLPDLLALLRFEQVDADKNLGYYLVKFKAPNAKYWPENNLNSFELDNAEYFIQLGELNSGSTSITWLDADKKPLADEKVTEIYFSITSKIRDVLLLNENQSKAL.

An N-terminal signal peptide occupies residues 1 to 22; the sequence is MSKFYKSGRVTTAVIVALSLSA. The N-palmitoyl cysteine moiety is linked to residue C23. The S-diacylglycerol cysteine moiety is linked to residue C23.

Belongs to the BamC family. Part of the Bam complex.

Its subcellular location is the cell outer membrane. Its function is as follows. Part of the outer membrane protein assembly complex, which is involved in assembly and insertion of beta-barrel proteins into the outer membrane. This is Outer membrane protein assembly factor BamC from Psychromonas ingrahamii (strain DSM 17664 / CCUG 51855 / 37).